The sequence spans 88 residues: Acyl-CoA-binding protein homolog (88 aa).

The 86-residue stretch at 3 to 88 (PQADFDKAAG…AHELIEKYGL (86 aa)) folds into the ACB domain. An acyl-CoA is bound by residues Lys-15, 30–34 (YGLYK), Lys-52, Lys-56, and Tyr-75.

Belongs to the ACBP family. As to expression, brain. Is selectively expressed in glial cells.

The protein resides in the endoplasmic reticulum. Its subcellular location is the golgi apparatus. Functionally, may play important functions in the control of brain and pituitary activities. May regulate GABA neurotransmission through a paracrine and/or autocrine mechanism. May not bind acyl-CoA esters. The polypeptide is Acyl-CoA-binding protein homolog (Pelophylax ridibundus (Marsh frog)).